Reading from the N-terminus, the 103-residue chain is MKFLALLCLGMVGFAFGAEVSGLDMIKSYSIAGAVIGLGIAALGGAIGMGHAAAATISGTARNPGISGKLLGTMFIALALIEAQVIYTLVLALIALYANPFLS.

The next 3 membrane-spanning stretches (helical) occupy residues Phe3–Leu23, Ser30–Gly50, and Met74–Ile94.

This sequence belongs to the ATPase C chain family. In terms of assembly, F-type ATPases have 2 components, F(1) - the catalytic core - and F(0) - the membrane proton channel. F(1) has five subunits: alpha(3), beta(3), gamma(1), delta(1), epsilon(1). F(0) has three main subunits: a(1), b(2) and c(10-14). The alpha and beta chains form an alternating ring which encloses part of the gamma chain. F(1) is attached to F(0) by a central stalk formed by the gamma and epsilon chains, while a peripheral stalk is formed by the delta and b chains.

The protein resides in the cell inner membrane. Its function is as follows. F(1)F(0) ATP synthase produces ATP from ADP in the presence of a proton or sodium gradient. F-type ATPases consist of two structural domains, F(1) containing the extramembraneous catalytic core and F(0) containing the membrane proton channel, linked together by a central stalk and a peripheral stalk. During catalysis, ATP synthesis in the catalytic domain of F(1) is coupled via a rotary mechanism of the central stalk subunits to proton translocation. Key component of the F(0) channel; it plays a direct role in translocation across the membrane. A homomeric c-ring of between 10-14 subunits forms the central stalk rotor element with the F(1) delta and epsilon subunits. The sequence is that of ATP synthase subunit c from Helicobacter hepaticus (strain ATCC 51449 / 3B1).